A 290-amino-acid chain; its full sequence is Fructose-bisphosphate aldolase (290 aa).

Ser-51 is a binding site for D-glyceraldehyde 3-phosphate. Catalysis depends on Asp-86, which acts as the Proton donor. Positions 87, 107, 137, and 179 each coordinate Zn(2+). Gly-180 is a dihydroxyacetone phosphate binding site. His-208 serves as a coordination point for Zn(2+). Residues 209 to 211 and 230 to 233 each bind dihydroxyacetone phosphate; these read GGS and NINT.

The protein belongs to the class II fructose-bisphosphate aldolase family. As to quaternary structure, homodimer. Requires Zn(2+) as cofactor.

The catalysed reaction is beta-D-fructose 1,6-bisphosphate = D-glyceraldehyde 3-phosphate + dihydroxyacetone phosphate. The protein operates within carbohydrate degradation; glycolysis; D-glyceraldehyde 3-phosphate and glycerone phosphate from D-glucose: step 4/4. Its function is as follows. Catalyzes the aldol condensation of dihydroxyacetone phosphate (DHAP or glycerone-phosphate) with glyceraldehyde 3-phosphate (G3P) to form fructose 1,6-bisphosphate (FBP) in gluconeogenesis and the reverse reaction in glycolysis. This is Fructose-bisphosphate aldolase (fba) from Ureaplasma parvum serovar 3 (strain ATCC 700970).